Consider the following 348-residue polypeptide: Protein RecA (348 aa).

66–73 provides a ligand contact to ATP; it reads GPESSGKT.

This sequence belongs to the RecA family.

The protein localises to the cytoplasm. Its function is as follows. Can catalyze the hydrolysis of ATP in the presence of single-stranded DNA, the ATP-dependent uptake of single-stranded DNA by duplex DNA, and the ATP-dependent hybridization of homologous single-stranded DNAs. It interacts with LexA causing its activation and leading to its autocatalytic cleavage. The sequence is that of Protein RecA from Legionella pneumophila (strain Lens).